We begin with the raw amino-acid sequence, 307 residues long: 17-beta-hydroxysteroid dehydrogenase type 3 (307 aa).

A helical membrane pass occupies residues 6–26 (IIFVLTGTCAILVFGGKIASL). Position 47 to 76 (47 to 76 (GKWAVITGGSDGIGRAYAEELSKQGMSVII)) interacts with NADP(+). A substrate-binding site is contributed by Ser187. Tyr200 acts as the Proton acceptor in catalysis.

The protein belongs to the short-chain dehydrogenases/reductases (SDR) family. Expression shows strong sexual dimorphism. In female, highly expressed in ovaries, and at lower levels in skin muscle, eyes and liver. In males, strongly expressed in liver and at lower levels in testis, spleen, kidney, intestine and muscle.

The protein resides in the endoplasmic reticulum. Its subcellular location is the membrane. It catalyses the reaction a 17beta-hydroxy steroid + NADP(+) = a 17-oxo steroid + NADPH + H(+). The enzyme catalyses testosterone + NADP(+) = androst-4-ene-3,17-dione + NADPH + H(+). It carries out the reaction 3beta-hydroxyandrost-5-en-17-one + NADPH + H(+) = androst-5-en-3beta,17beta-diol + NADP(+). The catalysed reaction is 3beta-hydroxy-5alpha-androstan-17-one + NADPH + H(+) = 5alpha-androstane-3beta,17beta-diol + NADP(+). It catalyses the reaction androst-4-ene-3,11,17-trione + NADPH + H(+) = 17beta-hydroxyandrost-4-ene-3,11-dione + NADP(+). The enzyme catalyses 11beta-hydroxyandrost-4-ene-3,17-dione + NADPH + H(+) = 11beta,17beta-dihydroxyandrost-4-ene-3-one + NADP(+). It participates in hormone biosynthesis; testosterone biosynthesis. Its pathway is steroid metabolism. Its function is as follows. Catalyzes the conversion of 17-oxosteroids to 17beta-hydroxysteroids in the presence of NADPH. Favors the reduction of androstenedione to testosterone. Testosterone is the key androgen driving male development and function. Among further tested androgens epiandrosterone and dehydroepiandrosterone are accepted as substrates and reduced at C-17. Can also reduce 11-ketoandrostenedione as well as 11beta-hydroxyandrostenedione at C-17 to the respective testosterone forms. Cannot use androsterone and androstanedione as substrates. This is 17-beta-hydroxysteroid dehydrogenase type 3 (hsd17b3) from Danio rerio (Zebrafish).